The following is a 491-amino-acid chain: Sodium-dependent glucose transporter 1 (491 aa).

11 consecutive transmembrane segments (helical) span residues 26 to 46, 52 to 72, 81 to 101, 119 to 139, 165 to 185, 210 to 230, 255 to 275, 277 to 297, 303 to 323, 338 to 358, and 365 to 385; these read FIFV…GILF, HLLL…VPWC, VMSV…IIIL, FALG…FLPL, LSYI…FILF, AVIF…VAYG, LFWG…TCLY, GTML…LVLF, LLWV…PSGF, SLFV…VGYL, and FPVL…LFPV. Disordered regions lie at residues 397–425 and 438–491; these read AQYN…DEAQ and NDQM…EKND. A compositionally biased stretch (acidic residues) spans 416-425; the sequence is MEEEDEDEAQ. The segment covering 440–458 has biased composition (polar residues); sequence QMKNSVTVISEDTPGNSAP.

This sequence belongs to the major facilitator superfamily.

The protein resides in the apical cell membrane. Its function is as follows. May function as a sodium-dependent glucose transporter. Potential channels for urea in the inner medulla of kidney. The polypeptide is Sodium-dependent glucose transporter 1 (mfsd4b) (Xenopus laevis (African clawed frog)).